A 346-amino-acid chain; its full sequence is MKFAILFGGNSYEHEISIVSAVVLKKVINQNLEFVFCDEERRFYHIPSEKMNSKTFSTKAYKNEKELFIKQGGFFSKGFLKENKLECECVINLIHGRDGEDGKIAALFEFYSIKFIGPRLEASVLSFNKELTKLYAKSVGVKTLDYTMLRKNQNSKEKLSFPCIIKPARLGSSIGISIVKDEKDLEYAKDVGFEFDNDLVVEEFKNNIKEYNLAGCMINDEFVFSIIEEPKKKEFLDFEQKYLSFSGHNELIEADLSEELKEKLKDSFKKIYNPLFKGALIRCDFFILDNEVYLNEINPNPGSLANYLFKDFNTTLNALADQISLEKMIKINYNFLHSINGQKGKL.

An ATP-grasp domain is found at 133–327 (KLYAKSVGVK…ALADQISLEK (195 aa)). 159–211 (LSFPCIIKPARLGSSIGISIVKDEKDLEYAKDVGFEFDNDLVVEEFKNNIKEY) contributes to the ATP binding site. Asp284, Glu296, and Asn298 together coordinate Mg(2+).

Belongs to the D-alanine--D-alanine ligase family. Mg(2+) serves as cofactor. Mn(2+) is required as a cofactor.

The protein resides in the cytoplasm. The catalysed reaction is 2 D-alanine + ATP = D-alanyl-D-alanine + ADP + phosphate + H(+). The protein operates within cell wall biogenesis; peptidoglycan biosynthesis. In terms of biological role, cell wall formation. This chain is D-alanine--D-alanine ligase, found in Campylobacter jejuni subsp. jejuni serotype O:6 (strain 81116 / NCTC 11828).